A 295-amino-acid chain; its full sequence is Phosphatidylglycerol--prolipoprotein diacylglyceryl transferase (295 aa).

4 helical membrane-spanning segments follow: residues 28–48, 69–89, 101–121, and 131–151; these read WYALAYIAGIVIAWRLAVLAT, LLTWIILGVILGGRLGFVLFY, ILMVWQGGMAFHGGLLGVVIA, and IPKLSLADLITHTVAPGLLLG. Arginine 152 contributes to the a 1,2-diacyl-sn-glycero-3-phospho-(1'-sn-glycerol) binding site. The next 3 helical transmembrane spans lie at 195-215, 224-244, and 268-288; these read QLYEAALEGLLLGTLLLWLVW, GLITGVFLAGYGLSRFVVEFF, and GLTMGQLLSLPMIALGLWFVL.

This sequence belongs to the Lgt family.

Its subcellular location is the cell inner membrane. The catalysed reaction is L-cysteinyl-[prolipoprotein] + a 1,2-diacyl-sn-glycero-3-phospho-(1'-sn-glycerol) = an S-1,2-diacyl-sn-glyceryl-L-cysteinyl-[prolipoprotein] + sn-glycerol 1-phosphate + H(+). Its pathway is protein modification; lipoprotein biosynthesis (diacylglyceryl transfer). Catalyzes the transfer of the diacylglyceryl group from phosphatidylglycerol to the sulfhydryl group of the N-terminal cysteine of a prolipoprotein, the first step in the formation of mature lipoproteins. This chain is Phosphatidylglycerol--prolipoprotein diacylglyceryl transferase, found in Ruegeria pomeroyi (strain ATCC 700808 / DSM 15171 / DSS-3) (Silicibacter pomeroyi).